Reading from the N-terminus, the 576-residue chain is 2-succinyl-5-enolpyruvyl-6-hydroxy-3-cyclohexene-1-carboxylate synthase (576 aa).

Belongs to the TPP enzyme family. MenD subfamily. In terms of assembly, homodimer. It depends on Mg(2+) as a cofactor. Mn(2+) is required as a cofactor. The cofactor is thiamine diphosphate.

It carries out the reaction isochorismate + 2-oxoglutarate + H(+) = 5-enolpyruvoyl-6-hydroxy-2-succinyl-cyclohex-3-ene-1-carboxylate + CO2. The protein operates within quinol/quinone metabolism; 1,4-dihydroxy-2-naphthoate biosynthesis; 1,4-dihydroxy-2-naphthoate from chorismate: step 2/7. It functions in the pathway quinol/quinone metabolism; menaquinone biosynthesis. In terms of biological role, catalyzes the thiamine diphosphate-dependent decarboxylation of 2-oxoglutarate and the subsequent addition of the resulting succinic semialdehyde-thiamine pyrophosphate anion to isochorismate to yield 2-succinyl-5-enolpyruvyl-6-hydroxy-3-cyclohexene-1-carboxylate (SEPHCHC). In Photobacterium profundum (strain SS9), this protein is 2-succinyl-5-enolpyruvyl-6-hydroxy-3-cyclohexene-1-carboxylate synthase.